A 163-amino-acid polypeptide reads, in one-letter code: Nucleotide-binding protein DET1318 (163 aa).

The protein belongs to the YajQ family.

In terms of biological role, nucleotide-binding protein. The protein is Nucleotide-binding protein DET1318 of Dehalococcoides mccartyi (strain ATCC BAA-2266 / KCTC 15142 / 195) (Dehalococcoides ethenogenes (strain 195)).